The sequence spans 518 residues: Arp2/3 complex-activating protein rickA (518 aa).

The disordered stretch occupies residues 310-518 (SAAQLQSAET…ERNAKQSQQR (209 aa)). Composition is skewed to pro residues over residues 344 to 354 (TPPPAPPPPMP) and 382 to 401 (VPPP…PPPV). The span at 418-430 (QPRPAVDTTNLMK) shows a compositional bias: polar residues. The WH2 domain maps to 424-441 (DTTNLMKQIQGGFNLKKI). Basic and acidic residues predominate over residues 439 to 461 (KKIEYGEDGKPIPKNKEDTKETS). The segment covering 488 to 498 (GTDSGWASDVS) has biased composition (polar residues).

As to quaternary structure, homodimer.

Its subcellular location is the cell surface. Its function is as follows. Recruits and activates the Arp2/3 complex, which in turn leads to actin polymerization, promoting Rickettsia motility during infection. The polypeptide is Arp2/3 complex-activating protein rickA (rickA) (Rickettsia bellii (strain RML369-C)).